Here is a 683-residue protein sequence, read N- to C-terminus: Elongation factor G-like protein (683 aa).

A tr-type G domain is found at 5–267 (QNVRSAALIG…YLGDIGVSPE (263 aa)). Residues 14-21 (GHNGSGKS), 73-77 (DTPGF), and 127-130 (NQMD) each bind GTP.

It belongs to the TRAFAC class translation factor GTPase superfamily. Classic translation factor GTPase family. EF-G/EF-2 subfamily.

The polypeptide is Elongation factor G-like protein (Thermotoga maritima (strain ATCC 43589 / DSM 3109 / JCM 10099 / NBRC 100826 / MSB8)).